The sequence spans 399 residues: Forkhead box protein Q1 (399 aa).

The tract at residues 1–112 is disordered; sequence MKLEVFAPRA…EGARSKPYTR (112 aa). Residues 32–54 are compositionally biased toward low complexity; that stretch reads LSAAGDDSLGSDGDCAANSPAAG. Over residues 55 to 66 the composition is skewed to gly residues; that stretch reads SGAGDLEGGGGE. A DNA-binding region (fork-head) is located at residues 114–205; it reads PKPPYSYIAL…SEYTFADGVF (92 aa). Positions 211–263 are disordered; sequence RLSHRTTVSASGYGGGSPPGPAGTPQPAPTAGSSPIARSPARQEEGSSPASKF. Over residues 228 to 238 the composition is skewed to pro residues; sequence PPGPAGTPQPA.

It localises to the nucleus. In terms of biological role, plays a role in hair follicle differentiation. This is Forkhead box protein Q1 (Foxq1) from Rattus norvegicus (Rat).